Here is a 465-residue protein sequence, read N- to C-terminus: Juvenile hormone epoxide hydrolase 2 (465 aa).

The helical transmembrane segment at 7–27 (ILWIAIVIGLGVLYYEITKEF) threads the bilayer. The active-site Nucleophile is aspartate 224. Tyrosine 370 functions as the Proton donor in the catalytic mechanism. Histidine 427 (proton acceptor) is an active-site residue.

Belongs to the peptidase S33 family.

The protein localises to the microsome membrane. It is found in the endoplasmic reticulum membrane. It carries out the reaction cis-stilbene oxide + H2O = (1R,2R)-hydrobenzoin. It catalyses the reaction 1-(4-methoxyphenyl)-N-methyl-N-[(3-methyloxetan-3-yl)methyl]methanamine + H2O = 2-{[(4-methoxybenzyl)(methyl)amino]methyl}-2-methylpropane-1,3-diol. Catalyzes juvenile hormone hydrolysis. In Ctenocephalides felis (Cat flea), this protein is Juvenile hormone epoxide hydrolase 2.